The following is a 228-amino-acid chain: Small ribosomal subunit protein uS3 (228 aa).

A KH type-2 domain is found at 39-107 (TREYLQDKLK…PVHINIEEIR (69 aa)).

It belongs to the universal ribosomal protein uS3 family. Part of the 30S ribosomal subunit. Forms a tight complex with proteins S10 and S14.

Binds the lower part of the 30S subunit head. Binds mRNA in the 70S ribosome, positioning it for translation. This is Small ribosomal subunit protein uS3 from Pseudomonas entomophila (strain L48).